Reading from the N-terminus, the 457-residue chain is tRNA modification GTPase MnmE (457 aa).

Positions 22, 83, and 122 each coordinate (6S)-5-formyl-5,6,7,8-tetrahydrofolate. In terms of domain architecture, TrmE-type G spans 219-378 (GLATAIIGRP…LEEAIKALFF (160 aa)). Asn-229 lines the K(+) pocket. Residues 229-234 (NVGKSS), 248-254 (TDIAGTT), and 273-276 (DTAG) each bind GTP. Ser-233 is a binding site for Mg(2+). Residues Thr-248, Ile-250, and Thr-253 each contribute to the K(+) site. Residue Thr-254 participates in Mg(2+) binding. Lys-457 provides a ligand contact to (6S)-5-formyl-5,6,7,8-tetrahydrofolate.

The protein belongs to the TRAFAC class TrmE-Era-EngA-EngB-Septin-like GTPase superfamily. TrmE GTPase family. In terms of assembly, homodimer. Heterotetramer of two MnmE and two MnmG subunits. Requires K(+) as cofactor.

It is found in the cytoplasm. In terms of biological role, exhibits a very high intrinsic GTPase hydrolysis rate. Involved in the addition of a carboxymethylaminomethyl (cmnm) group at the wobble position (U34) of certain tRNAs, forming tRNA-cmnm(5)s(2)U34. The sequence is that of tRNA modification GTPase MnmE from Listeria innocua serovar 6a (strain ATCC BAA-680 / CLIP 11262).